The chain runs to 118 residues: Late cornified envelope protein 1F (118 aa).

The segment covering 1–10 has biased composition (low complexity); that stretch reads MSCQQSQQQC. Disordered stretches follow at residues 1-23 and 82-118; these read MSCQ…CPPK and RRRS…GGCC. Positions 11-23 are enriched in pro residues; that stretch reads QPPPKCTPKCPPK. Over residues 95–104 the composition is skewed to low complexity; sequence CCSQPSAGSS. Over residues 105 to 118 the composition is skewed to gly residues; that stretch reads CCGGGSGQHSGGCC.

This sequence belongs to the LCE family. In terms of tissue distribution, skin-specific. Expression was readily detected in adult trunk skin, adult arm skin, fetal skin, penal skin, vulva, esophagus and tongue. Not expressed in the cervix, rectum, lung, colon, or placenta. Expression is observed in the fibroblasts.

Functionally, precursors of the cornified envelope of the stratum corneum. In Homo sapiens (Human), this protein is Late cornified envelope protein 1F (LCE1F).